A 376-amino-acid polypeptide reads, in one-letter code: Homeobox protein extradenticle (376 aa).

The interval 16 to 35 (APQGYSLSGQDDGQNTGNEN) is disordered. Over residues 20-34 (YSLSGQDDGQNTGNE) the composition is skewed to polar residues. The region spanning 38–237 (RKQKDIGEIL…VMILRSRFLD (200 aa)) is the PBC domain. Residues 45–124 (EILQQIMSIS…EGVAGPEKGG (80 aa)) form a PBC-A region. A PBC-B region spans residues 127–237 (AAAASAAAAS…VMILRSRFLD (111 aa)). A DNA-binding region (homeobox; TALE-type) is located at residues 238 to 300 (ARRKRRNFSK…NKRIRYKKNI (63 aa)). Low complexity predominate over residues 318–335 (ASPYSMAGPPSGTTTPMM). The segment at 318-376 (ASPYSMAGPPSGTTTPMMSPAPPQDSMGYTMGSGGYDQQQPYDNSMGGYDPNLHQDLSP) is disordered.

Belongs to the TALE/PBX homeobox family. Interacts with Ubx and hth.

It is found in the nucleus. Functionally, transcription factor which acts with the selector homeodomain proteins altering the regulation of downstream target genes such as wingless (wg), teashirt (tsh) and decapentaplegic (dpp), thus affecting segmental identity. Delimits the eye field and prevent inappropriate eye development. Required for proper localization of chordotonal organs within the peripheral nervous system. The protein is Homeobox protein extradenticle of Drosophila pseudoobscura pseudoobscura (Fruit fly).